We begin with the raw amino-acid sequence, 223 residues long: Expansin-B6 (223 aa).

In terms of domain architecture, Expansin-like EG45 spans 16–124 (GGACGFAVAN…RRVECLYRRT (109 aa)). Cystine bridges form between C19–C46, C49–C119, and C54–C60. Positions 137–218 (YYISFVVEYE…NWKPNETYRS (82 aa)) constitute an Expansin-like CBD domain. The N-linked (GlcNAc...) asparagine glycan is linked to N213.

This sequence belongs to the expansin family. Expansin B subfamily.

The protein resides in the secreted. Its subcellular location is the cell wall. It localises to the membrane. May cause loosening and extension of plant cell walls by disrupting non-covalent bonding between cellulose microfibrils and matrix glucans. This chain is Expansin-B6, found in Arabidopsis thaliana (Mouse-ear cress).